Reading from the N-terminus, the 751-residue chain is Ribosomal RNA large subunit methyltransferase K/L (751 aa).

The region spanning 44 to 155 is the THUMP domain; sequence LAYRTCLWSR…KNKLVLSIDL (112 aa).

This sequence belongs to the methyltransferase superfamily. RlmKL family.

It localises to the cytoplasm. It carries out the reaction guanosine(2445) in 23S rRNA + S-adenosyl-L-methionine = N(2)-methylguanosine(2445) in 23S rRNA + S-adenosyl-L-homocysteine + H(+). The catalysed reaction is guanosine(2069) in 23S rRNA + S-adenosyl-L-methionine = N(2)-methylguanosine(2069) in 23S rRNA + S-adenosyl-L-homocysteine + H(+). Specifically methylates the guanine in position 2445 (m2G2445) and the guanine in position 2069 (m7G2069) of 23S rRNA. In Cellvibrio japonicus (strain Ueda107) (Pseudomonas fluorescens subsp. cellulosa), this protein is Ribosomal RNA large subunit methyltransferase K/L.